Here is a 504-residue protein sequence, read N- to C-terminus: MFGDRQRPMVLVLGLGESGLAIARWCARHGCRLRVADTCETPPNLAALTAAGVDFEFVGGAFSPALVDGGIELVALSPGLSPLAEDLAPLVAAARERGIPVWGELEFFAQALAALGANGYAPKVIAITGTNGKTTTTSLAGLLCERAGKKVAVAGNISPAMLDKLTEAIDAAALPDVWVLELSSFQLDTAHTFAPDAATILNITQDHLDWHGGFAAYAAAKGRVFGPRTVRVLNRDDAEVMRFAPPAAAADAPRAVTFGLNEPAADGDYGLLRENGIAWLVEAIDRDGADAPAAPSRRRKQEAANPPDIALKRLMPADALRIRGLHNAANALAAYALARAIGLPAAPLLHGLREYRGEPHRVEVIATLDGVDYVDDSKGTNVGATVAALDGLAQRAVLIAGGDGKGQDFEPLAAPVARWCRAVMLIGRDAPALREALADTGVPLADHATLEAAVRAASALAQPGDAVLLSPACASLDMFRNYAHRADVFRSAVEDIALEKGTTL.

An ATP-binding site is contributed by 129-135; the sequence is GTNGKTT.

It belongs to the MurCDEF family.

It localises to the cytoplasm. It catalyses the reaction UDP-N-acetyl-alpha-D-muramoyl-L-alanine + D-glutamate + ATP = UDP-N-acetyl-alpha-D-muramoyl-L-alanyl-D-glutamate + ADP + phosphate + H(+). It participates in cell wall biogenesis; peptidoglycan biosynthesis. In terms of biological role, cell wall formation. Catalyzes the addition of glutamate to the nucleotide precursor UDP-N-acetylmuramoyl-L-alanine (UMA). This Burkholderia mallei (strain ATCC 23344) protein is UDP-N-acetylmuramoylalanine--D-glutamate ligase.